Reading from the N-terminus, the 256-residue chain is uncharacterized protein (256 aa).

A signal peptide spans Met-1–Gly-24. Residue Cys-25 is the site of N-palmitoyl cysteine attachment. Cys-25 carries S-diacylglycerol cysteine lipidation.

It belongs to the staphylococcal tandem lipoprotein family.

It is found in the cell membrane. This is an uncharacterized protein from Staphylococcus aureus (strain Mu50 / ATCC 700699).